An 86-amino-acid polypeptide reads, in one-letter code: Co-chaperonin GroES (86 aa).

It belongs to the GroES chaperonin family. Heptamer of 7 subunits arranged in a ring. Interacts with the chaperonin GroEL.

It localises to the cytoplasm. In terms of biological role, together with the chaperonin GroEL, plays an essential role in assisting protein folding. The GroEL-GroES system forms a nano-cage that allows encapsulation of the non-native substrate proteins and provides a physical environment optimized to promote and accelerate protein folding. GroES binds to the apical surface of the GroEL ring, thereby capping the opening of the GroEL channel. This chain is Co-chaperonin GroES, found in Campylobacter curvus (strain 525.92).